A 382-amino-acid chain; its full sequence is Galactokinase (382 aa).

Substrate is bound at residue Glu34–Asp37. Gly124–Ser130 contacts ATP. Mg(2+)-binding residues include Ser130 and Glu162. The active-site Proton acceptor is the Asp174. Tyr223 is a substrate binding site.

Belongs to the GHMP kinase family. GalK subfamily.

The protein localises to the cytoplasm. The enzyme catalyses alpha-D-galactose + ATP = alpha-D-galactose 1-phosphate + ADP + H(+). It functions in the pathway carbohydrate metabolism; galactose metabolism. Catalyzes the transfer of the gamma-phosphate of ATP to D-galactose to form alpha-D-galactose-1-phosphate (Gal-1-P). The polypeptide is Galactokinase (Salmonella newport (strain SL254)).